A 185-amino-acid polypeptide reads, in one-letter code: Ribosome-recycling factor (185 aa).

The protein belongs to the RRF family.

Its subcellular location is the cytoplasm. Functionally, responsible for the release of ribosomes from messenger RNA at the termination of protein biosynthesis. May increase the efficiency of translation by recycling ribosomes from one round of translation to another. In Lacticaseibacillus casei (strain BL23) (Lactobacillus casei), this protein is Ribosome-recycling factor.